A 486-amino-acid chain; its full sequence is UDP-N-acetylmuramate--L-alanine ligase (486 aa).

ATP is bound at residue 132–138 (GTHGKTT).

This sequence belongs to the MurCDEF family.

It localises to the cytoplasm. It carries out the reaction UDP-N-acetyl-alpha-D-muramate + L-alanine + ATP = UDP-N-acetyl-alpha-D-muramoyl-L-alanine + ADP + phosphate + H(+). The protein operates within cell wall biogenesis; peptidoglycan biosynthesis. In terms of biological role, cell wall formation. In Halorhodospira halophila (strain DSM 244 / SL1) (Ectothiorhodospira halophila (strain DSM 244 / SL1)), this protein is UDP-N-acetylmuramate--L-alanine ligase.